We begin with the raw amino-acid sequence, 479 residues long: 6-phosphogluconate dehydrogenase, decarboxylating (479 aa).

NADP(+) contacts are provided by residues 9 to 14 (GLGVMG), 32 to 34 (NRT), 77 to 79 (VQA), and Asn105. Substrate is bound by residues Asn105 and 131 to 133 (SGG). The Proton acceptor role is filled by Lys186. Residue 189–190 (HN) coordinates substrate. Glu193 functions as the Proton donor in the catalytic mechanism. The substrate site is built by Tyr194, Lys263, Arg290, Arg454, and His460.

Belongs to the 6-phosphogluconate dehydrogenase family. In terms of assembly, homodimer.

It carries out the reaction 6-phospho-D-gluconate + NADP(+) = D-ribulose 5-phosphate + CO2 + NADPH. It functions in the pathway carbohydrate degradation; pentose phosphate pathway; D-ribulose 5-phosphate from D-glucose 6-phosphate (oxidative stage): step 3/3. In terms of biological role, catalyzes the oxidative decarboxylation of 6-phosphogluconate to ribulose 5-phosphate and CO(2), with concomitant reduction of NADP to NADPH. This chain is 6-phosphogluconate dehydrogenase, decarboxylating (GND), found in Trypanosoma brucei brucei.